We begin with the raw amino-acid sequence, 554 residues long: Protein PNS1 (554 aa).

Low complexity-rich tracts occupy residues 1 to 19 (MSGPQYGAQPGGYYNNNNN) and 27 to 45 (SYQMNPMPTDGNYGQQPQY). Residues 1 to 90 (MSGPQYGAQP…TDGYGGPPPS (90 aa)) are disordered. Residues 1–105 (MSGPQYGAQP…KVQKPKYNDW (105 aa)) are Cytoplasmic-facing. Over residues 68 to 90 (PQGPPPNGSKPPPTDGYGGPPPS) the composition is skewed to pro residues. A helical transmembrane segment spans residues 106–126 (WAGLLFLATVAGFVAVSAISI). At 127–153 (HGYADNRSQNNGSLNGQRNTFGLTTHT) the chain is on the extracellular side. N-linked (GlcNAc...) asparagine glycans are attached at residues asparagine 132 and asparagine 137. A helical membrane pass occupies residues 154 to 174 (IYLFVWVLICAIVLSYAYMWM). The Cytoplasmic portion of the chain corresponds to 175–181 (ARKFTKQ). A helical transmembrane segment spans residues 182–202 (FIYATGILNIVMGLVTALYML). The Extracellular portion of the chain corresponds to 203–206 (SRKY). Residues 207–227 (WSGGIVFLIFVVLQALFFWSC) form a helical membrane-spanning segment. The Cytoplasmic portion of the chain corresponds to 228-255 (RSRIPFSTLMLQTAIDVSKVHGHVYLVS). Residues 256 to 276 (AVGGVIGTLFAAYWAITLVAV) form a helical membrane-spanning segment. Residues 277–297 (YVKFEPDPNNAACRNAGGCSS) lie on the Extracellular side of the membrane. The chain crosses the membrane as a helical span at residues 298-318 (GKVIGLIVFITFAGYWISEWL). The Cytoplasmic segment spans residues 319–352 (KNTIHTTVAGIYGSWYFNSRNYPTKVTRGALKRS). Residues 353 to 373 (LTYSFGSISLGSLFIAIINLI) traverse the membrane as a helical segment. At 374-389 (RQLAQAAQQNAAQEGD) the chain is on the extracellular side. A helical membrane pass occupies residues 390–410 (ILGTILWCIFGCLIGILDWLV). Residues 411–451 (EFINRYAFCHIALYGKAYFAAAKDTWKMVKDRGIDALINEC) are Cytoplasmic-facing. Residues 452–472 (LIGPVLTFGATFVAYACGLIA) traverse the membrane as a helical segment. The Extracellular portion of the chain corresponds to 473 to 487 (YLYMVYTKPAYNDGG). The helical transmembrane segment at 488 to 508 (GFTPVVVAFAFLIGLQVCNVF) threads the bilayer. The Cytoplasmic segment spans residues 509–554 (TTPLTSGIDTIFVAMAWDPEVLMRDHPDLYHRMVQVYPHVQEAIHA).

Belongs to the CTL (choline transporter-like) family.

The protein resides in the cell membrane. Probably involved in transport through the plasma membrane. The chain is Protein PNS1 (pns-1) from Neurospora crassa (strain ATCC 24698 / 74-OR23-1A / CBS 708.71 / DSM 1257 / FGSC 987).